The primary structure comprises 746 residues: WD repeat-containing protein 91 (746 aa).

Residues 183 to 215 (QRTNQVQEENEVLRQKLFALQAEIHRLKKEEQQ) are a coiled coil. Phosphoserine is present on Ser256. Residues 265–278 (LLPQSKKSPSRLSP) are compositionally biased toward low complexity. The tract at residues 265–336 (LLPQSKKSPS…QHRQRRLQDH (72 aa)) is disordered. Positions 282–299 (PPQTQSSAKKESFGSQTT) are enriched in polar residues. 2 positions are modified to phosphoserine: Ser288 and Ser293. 7 WD repeats span residues 405 to 444 (EHHS…QTKA), 447 to 487 (ISKS…NLCE), 514 to 554 (AASS…QQLQ), 559 to 598 (PEPI…CAMS), 601 to 640 (AHCG…LKVS), 663 to 701 (VQVP…KVLE), and 708 to 746 (GHRA…AHKV).

This sequence belongs to the WD repeat WDR91 family. As to quaternary structure, interacts with WDR81; involved in early to late endosome cargo transport. Interacts with BECN1; negatively regulates the PI3 kinase/PI3K activity associated with endosomal membranes.

It localises to the early endosome membrane. Its subcellular location is the late endosome membrane. In terms of biological role, functions as a negative regulator of the PI3 kinase/PI3K activity associated with endosomal membranes via BECN1, a core subunit of the PI3K complex. By modifying the phosphatidylinositol 3-phosphate/PtdInsP3 content of endosomal membranes may regulate endosome fusion, recycling, sorting and early to late endosome transport. It is for instance, required for the delivery of cargos like BST2/tetherin from early to late endosome and thereby participates indirectly to their degradation by the lysosome. May play a role in meiosis. The sequence is that of WD repeat-containing protein 91 from Bos taurus (Bovine).